The sequence spans 247 residues: DNA polymerase sliding clamp 1 (247 aa).

This sequence belongs to the PCNA family. As to quaternary structure, heterotrimer. The subunits circularize to form a toroid; DNA passes through its center. Replication factor C (RFC) is required to load the toroid on the DNA.

Sliding clamp subunit that acts as a moving platform for DNA processing. Responsible for tethering the catalytic subunit of DNA polymerase and other proteins to DNA during high-speed replication. The chain is DNA polymerase sliding clamp 1 from Aeropyrum pernix (strain ATCC 700893 / DSM 11879 / JCM 9820 / NBRC 100138 / K1).